A 46-amino-acid chain; its full sequence is MQVLSSLRSAKNRHPDCKVVRRKGRIYVICKTNPRFKAVQGRKKKR.

This sequence belongs to the bacterial ribosomal protein bL36 family.

In Serratia proteamaculans (strain 568), this protein is Large ribosomal subunit protein bL36.